The sequence spans 439 residues: ATP-dependent RNA helicase RhlB (439 aa).

Positions 9 to 37 match the Q motif motif; sequence QKFADLPLHPEVKQALAENGFEFCTPIQA. In terms of domain architecture, Helicase ATP-binding spans 40 to 219; it reads LPVLLQSKDI…YDHMNDPVKV (180 aa). An ATP-binding site is contributed by 53 to 60; sequence AQTGTGKT. Positions 165-168 match the DEAD box motif; the sequence is DEAD. Residues 243–390 form the Helicase C-terminal domain; that stretch reads KMRLLLTLIE…VSNYDSSALL (148 aa). The interval 398-439 is disordered; it reads KIPRKHPAGTRNLRERAGAGRPQGAHRSGGRPPRHDRTRRHS. The segment covering 425–439 has biased composition (basic residues); the sequence is SGGRPPRHDRTRRHS.

Belongs to the DEAD box helicase family. RhlB subfamily. As to quaternary structure, component of the RNA degradosome, which is a multiprotein complex involved in RNA processing and mRNA degradation.

It is found in the cytoplasm. It carries out the reaction ATP + H2O = ADP + phosphate + H(+). Functionally, DEAD-box RNA helicase involved in RNA degradation. Has RNA-dependent ATPase activity and unwinds double-stranded RNA. The polypeptide is ATP-dependent RNA helicase RhlB (Shewanella putrefaciens (strain CN-32 / ATCC BAA-453)).